The primary structure comprises 250 residues: Archaeal flagellar motor scaffold protein FlaX (250 aa).

Topologically, residues 1–9 are extracellular; it reads MAIQDLLQS. Residues 10–30 traverse the membrane as a helical segment; it reads SLFIILIGVGIPIAAFLEILF. Residues 31–250 lie on the Cytoplasmic side of the membrane; it reads RVILPKTKRV…MILEGGGVNG (220 aa). Residues 42 to 61 show a composition bias toward polar residues; sequence TQQSPQNISQEQRFPTQQKP. Residues 42 to 72 are disordered; it reads TQQSPQNISQEQRFPTQQKPANDETSKYSSD. Basic and acidic residues predominate over residues 62 to 72; it reads ANDETSKYSSD.

As to quaternary structure, the S.acidocaldarius archaellum assembly machinery and its filament consist of seven proteins (FlaB, FlaF, FlaG, FlaH, FlaI, FlaJ and FlaX). FlaX assembles into ring-shaped oligomers. Interacts directly with FlaH and the motor ATPase FlaI.

The protein localises to the archaeal flagellum. It localises to the cell membrane. With respect to regulation, the presence of the flagellar core components FlaH, FlaI and FlaJ seems to be crucial for the stability of FlaX. In terms of biological role, component of the archaellum. FlaX, FlaH and FlaI form the core cytoplasmic motor complex of the crenarchaeal archaellum. FlaX forms a ring that may act as a membrane-bound cytoplasmic scaffold that guides the assembly of the archaellum motor complex. Is essential for archaellum assembly. The chain is Archaeal flagellar motor scaffold protein FlaX from Sulfolobus acidocaldarius (strain ATCC 33909 / DSM 639 / JCM 8929 / NBRC 15157 / NCIMB 11770).